A 69-amino-acid polypeptide reads, in one-letter code: Large ribosomal subunit protein bL31 (69 aa).

The Zn(2+) site is built by Cys16, Cys18, Cys37, and Cys40.

Belongs to the bacterial ribosomal protein bL31 family. Type A subfamily. Part of the 50S ribosomal subunit. Zn(2+) is required as a cofactor.

Functionally, binds the 23S rRNA. The polypeptide is Large ribosomal subunit protein bL31 (Teredinibacter turnerae (strain ATCC 39867 / T7901)).